The following is a 100-amino-acid chain: Probable steroid-binding protein 3 (100 aa).

The residue at position 1 (M1) is an N-acetylmethionine. Residues 1-82 enclose the Cytochrome b5 heme-binding domain; it reads MEFTAEQLSQ…LTEKEINTLN (82 aa). The tract at residues 1 to 82 is sterol-binding; that stretch reads MEFTAEQLSQ…LTEKEINTLN (82 aa).

Belongs to the cytochrome b5 family. MAPR subfamily.

Its subcellular location is the nucleus. The chain is Probable steroid-binding protein 3 (MP3) from Arabidopsis thaliana (Mouse-ear cress).